The chain runs to 300 residues: N-acetylmannosamine kinase (300 aa).

Residues 5–12 (ALDIGGTK) and 132–139 (GVGGGIVL) each bind ATP. Residues histidine 156, cysteine 166, cysteine 168, and cysteine 173 each contribute to the Zn(2+) site.

This sequence belongs to the ROK (NagC/XylR) family. NanK subfamily. In terms of assembly, homodimer.

The catalysed reaction is an N-acyl-D-mannosamine + ATP = an N-acyl-D-mannosamine 6-phosphate + ADP + H(+). It participates in amino-sugar metabolism; N-acetylneuraminate degradation; D-fructose 6-phosphate from N-acetylneuraminate: step 2/5. In terms of biological role, catalyzes the phosphorylation of N-acetylmannosamine (ManNAc) to ManNAc-6-P. This chain is N-acetylmannosamine kinase, found in Haemophilus influenzae (strain PittEE).